The primary structure comprises 185 residues: MQTGLSLACLVLLCSVLGEAALRKPKRQAGATDTNGAAKSEPAPVKTKGLKTLDRGWGEDIEWAQTYEEGLAKARENNKPLMVIHHLEDCPYSIALKKAFVADKMAQKLAQEDFIMLNLVHPVADENQSPDGHYVPRVIFIDPSLTVRSDLKGRYGNKLYAYDADDIPELITNMKKAKSFLKTEL.

The first 18 residues, 1–18, serve as a signal peptide directing secretion; the sequence is MQTGLSLACLVLLCSVLG. The segment at 25–45 is disordered; it reads PKRQAGATDTNGAAKSEPAPV.

This sequence belongs to the AGR family. As to expression, expressed in the anterior of the dorsal ectoderm from late gastrula stages onwards. Becomes restricted to the cement gland anlage at the onset of neurulation (stages 13 to 14) and expressed exclusively in the cement gland from stage 18 onwards, with transient expression in the hatching gland during tailbud stages.

The protein localises to the secreted. Functionally, involved in cement gland formation; probably specifies dorsal ectoderm to acquire an anterior fate such as cement gland and forebrain. Signals via the FGF pathway. This Xenopus laevis (African clawed frog) protein is Anterior gradient protein 2 (ag2).